A 407-amino-acid polypeptide reads, in one-letter code: Argininosuccinate synthase (407 aa).

Residues 11-19 and Ala-39 contribute to the ATP site; that span reads AYSGGLDTS. The L-citrulline site is built by Tyr-90 and Ser-95. Gly-120 is an ATP binding site. Residues Thr-122, Asn-126, and Asp-127 each coordinate L-aspartate. Asn-126 is a binding site for L-citrulline. L-citrulline contacts are provided by Arg-130, Ser-179, Ser-188, Glu-264, and Tyr-276.

The protein belongs to the argininosuccinate synthase family. Type 1 subfamily. Homotetramer.

The protein localises to the cytoplasm. It catalyses the reaction L-citrulline + L-aspartate + ATP = 2-(N(omega)-L-arginino)succinate + AMP + diphosphate + H(+). Its pathway is amino-acid biosynthesis; L-arginine biosynthesis; L-arginine from L-ornithine and carbamoyl phosphate: step 2/3. The polypeptide is Argininosuccinate synthase (Roseiflexus sp. (strain RS-1)).